Reading from the N-terminus, the 103-residue chain is Large ribosomal subunit protein bL21 (103 aa).

This sequence belongs to the bacterial ribosomal protein bL21 family. As to quaternary structure, part of the 50S ribosomal subunit. Contacts protein L20.

In terms of biological role, this protein binds to 23S rRNA in the presence of protein L20. In Psychrobacter arcticus (strain DSM 17307 / VKM B-2377 / 273-4), this protein is Large ribosomal subunit protein bL21.